The sequence spans 103 residues: NADH-quinone oxidoreductase subunit K (103 aa).

The next 3 membrane-spanning stretches (helical) occupy residues 1–21 (MIVP…VGGV), 29–49 (ILLI…AFAG), and 62–82 (AVII…ALLV). The tract at residues 84 to 103 (GRRGGGTDRADSYDRLGEES) is disordered. Residues 88 to 103 (GGTDRADSYDRLGEES) show a composition bias toward basic and acidic residues.

This sequence belongs to the complex I subunit 4L family. As to quaternary structure, NDH-1 is composed of 14 different subunits. Subunits NuoA, H, J, K, L, M, N constitute the membrane sector of the complex.

Its subcellular location is the cell inner membrane. It catalyses the reaction a quinone + NADH + 5 H(+)(in) = a quinol + NAD(+) + 4 H(+)(out). Functionally, NDH-1 shuttles electrons from NADH, via FMN and iron-sulfur (Fe-S) centers, to quinones in the respiratory chain. The immediate electron acceptor for the enzyme in this species is believed to be ubiquinone. Couples the redox reaction to proton translocation (for every two electrons transferred, four hydrogen ions are translocated across the cytoplasmic membrane), and thus conserves the redox energy in a proton gradient. The chain is NADH-quinone oxidoreductase subunit K from Solidesulfovibrio magneticus (strain ATCC 700980 / DSM 13731 / RS-1) (Desulfovibrio magneticus).